A 272-amino-acid polypeptide reads, in one-letter code: MTIVKCKPTSPARRHVIKVVNPELHKGKPFIPLLETISKSGGRNNNGHITTRHVGGGHKQRYRIIDFKRNKDNIAAKIERIEYDPNRSANIALVLYQDGERRYIIAPKGLKVGDQIISGHHATIKTGNTLPIQNIPLGSIVHNVEIKPGKGGQIARSAGASVQIIARDYKYVTLRLRSGEIRRIHSECRATLGEVGNAEHMLRVLGKAGANRWRSIRPTVRGTAMNPVDHPHGGGEGRNFGKHPVSPWGKKTKGKKTRNNRLTDKFIVHRRS.

The disordered stretch occupies residues 222–272 (GTAMNPVDHPHGGGEGRNFGKHPVSPWGKKTKGKKTRNNRLTDKFIVHRRS). Residues 250–259 (KKTKGKKTRN) are compositionally biased toward basic residues. Residues 261–272 (RLTDKFIVHRRS) show a composition bias toward basic and acidic residues.

It belongs to the universal ribosomal protein uL2 family. Part of the 50S ribosomal subunit. Forms a bridge to the 30S subunit in the 70S ribosome.

Functionally, one of the primary rRNA binding proteins. Required for association of the 30S and 50S subunits to form the 70S ribosome, for tRNA binding and peptide bond formation. It has been suggested to have peptidyltransferase activity; this is somewhat controversial. Makes several contacts with the 16S rRNA in the 70S ribosome. This chain is Large ribosomal subunit protein uL2, found in Baumannia cicadellinicola subsp. Homalodisca coagulata.